Here is a 376-residue protein sequence, read N- to C-terminus: Cytochrome c oxidase subunit 2, mitochondrial (376 aa).

The chain crosses the membrane as a helical span at residues 164–184 (IFFFLVQILVFVLWVLSRALW). Residues 185 to 204 (CFRSKISPIPQRIVHGTTIE) lie on the Mitochondrial matrix side of the membrane. The helical transmembrane segment at 205 to 225 (ILWTILPSIILMFIAIPSFTL) threads the bilayer. The Mitochondrial intermembrane segment spans residues 226–376 (LYSMDDVVVD…YGSWVSNQIQ (151 aa)). Cu cation is bound by residues H309, C344, E346, C348, H352, and M355. E346 lines the Mg(2+) pocket.

It belongs to the cytochrome c oxidase subunit 2 family. As to quaternary structure, component of the cytochrome c oxidase (complex IV, CIV), a multisubunit enzyme composed of a catalytic core of 3 subunits and several supernumerary subunits. The complex exists as a monomer or a dimer and forms supercomplexes (SCs) in the inner mitochondrial membrane with ubiquinol-cytochrome c oxidoreductase (cytochrome b-c1 complex, complex III, CIII). Cu cation serves as cofactor.

The protein resides in the mitochondrion inner membrane. It carries out the reaction 4 Fe(II)-[cytochrome c] + O2 + 8 H(+)(in) = 4 Fe(III)-[cytochrome c] + 2 H2O + 4 H(+)(out). Its function is as follows. Component of the cytochrome c oxidase, the last enzyme in the mitochondrial electron transport chain which drives oxidative phosphorylation. The respiratory chain contains 3 multisubunit complexes succinate dehydrogenase (complex II, CII), ubiquinol-cytochrome c oxidoreductase (cytochrome b-c1 complex, complex III, CIII) and cytochrome c oxidase (complex IV, CIV), that cooperate to transfer electrons derived from NADH and succinate to molecular oxygen, creating an electrochemical gradient over the inner membrane that drives transmembrane transport and the ATP synthase. Cytochrome c oxidase is the component of the respiratory chain that catalyzes the reduction of oxygen to water. Electrons originating from reduced cytochrome c in the intermembrane space (IMS) are transferred via the dinuclear copper A center (CU(A)) of subunit 2 and heme A of subunit 1 to the active site in subunit 1, a binuclear center (BNC) formed by heme A3 and copper B (CU(B)). The BNC reduces molecular oxygen to 2 water molecules using 4 electrons from cytochrome c in the IMS and 4 protons from the mitochondrial matrix. The protein is Cytochrome c oxidase subunit 2, mitochondrial (COX2) of Vigna unguiculata (Cowpea).